The primary structure comprises 153 residues: Heavy metal-associated isoprenylated plant protein 26 (153 aa).

One can recognise an HMA domain in the interval 25 to 89 (LQTVEIKVKM…MSHRTGKKVE (65 aa)). A metal cation contacts are provided by Cys-36 and Cys-39. The residue at position 150 (Cys-150) is a Cysteine methyl ester. The S-farnesyl cysteine moiety is linked to residue Cys-150. Residues 151 to 153 (VVM) constitute a propeptide, removed in mature form.

Belongs to the HIPP family. As to quaternary structure, interacts with ZHD11/HB29 and ACBP2 (via ankyrin repeats). May also interact with HB21. In terms of tissue distribution, expressed in roots, stems and flowers. Lower expression in siliques and leaves. Expressed in the vascular tissues. Detected in lateral roots, shoot apical meristem, petals of unopened flowers and weak expression in leaf vasculature.

It localises to the nucleus membrane. Its subcellular location is the cell membrane. Heavy-metal-binding protein. Binds lead, cadmium and copper. May be involved in heavy-metal transport. May be involved in cadmium transport and play a role in cadmium detoxification. The protein is Heavy metal-associated isoprenylated plant protein 26 of Arabidopsis thaliana (Mouse-ear cress).